Consider the following 240-residue polypeptide: MGKTQPLPILITGGGRRIGLALAWHFINQKQPVIVSYRTHYPAIDGLINAGAQCIQADFSTNDGVMAFADEVLKTTHGLRAILHNASAWIAEKPGAPLADVLACMMQIHVNTPYLLNHALERLLRGHGHAASDIIHFTDYVVERGSDKHVAYAASKAALDNMTRSFARKLAPEVKVNSIAPSLILFNEHDDAEYRQQALNKSLMKTAPGEKEVIDLVDYLLTSCFVTGRSFPLDGGRHLR.

Residue tyrosine 152 is the Proton acceptor of the active site.

The protein belongs to the short-chain dehydrogenases/reductases (SDR) family. FolM subfamily.

It catalyses the reaction (6S)-5,6,7,8-tetrahydrofolate + NADP(+) = 7,8-dihydrofolate + NADPH + H(+). The catalysed reaction is 7,8-dihydromonapterin + NADPH + H(+) = 5,6,7,8-tetrahydromonapterin + NADP(+). Its function is as follows. Catalyzes the reduction of dihydromonapterin to tetrahydromonapterin. Also has lower activity with dihydrofolate. The chain is Dihydromonapterin reductase (folM) from Shigella flexneri serotype 5b (strain 8401).